Here is a 282-residue protein sequence, read N- to C-terminus: Putative 4-diphosphocytidyl-2-C-methyl-D-erythritol kinase (282 aa).

Residue Lys10 is part of the active site. Pro94–Ser104 is an ATP binding site. Asp136 is an active-site residue.

This sequence belongs to the GHMP kinase family. IspE subfamily.

The enzyme catalyses 4-CDP-2-C-methyl-D-erythritol + ATP = 4-CDP-2-C-methyl-D-erythritol 2-phosphate + ADP + H(+). In terms of biological role, catalyzes the phosphorylation of the position 2 hydroxy group of 4-diphosphocytidyl-2C-methyl-D-erythritol. The sequence is that of Putative 4-diphosphocytidyl-2-C-methyl-D-erythritol kinase (ipk) from Streptococcus mutans serotype c (strain ATCC 700610 / UA159).